The sequence spans 299 residues: MSATGDRHPTQGDQEAPVSQEGAQAEAAGAGNQEGGDSGPDSSDMVPAAEVVGVAGPVEGLGEEEGEQAAGLAAVPQGGSAEEDSDIGPATEEEEEEEEGNEAANFDLAVATRRYPAAGIGFVFLYLVHSLLRRLYHNDHIQIANRHLSRLMVGPHAAVPNLWDNPPLLLLSQRLGAGAAAPEGEGLGLIQEAASVQEAASVPEPAVPADLAEMAREPAEEAADEKPPEEAAEEKLTEEATEEPAAEEPTSEEAVAPEEVTKSQPEKWDEEAQDAAGEEEKEQEKEKDVENKVKNSKGT.

Over residues 1 to 10 (MSATGDRHPT) the composition is skewed to basic and acidic residues. 2 disordered regions span residues 1 to 102 (MSAT…EGNE) and 215 to 299 (AREP…SKGT). 2 stretches are compositionally biased toward low complexity: residues 20–31 (QEGAQAEAAGAG) and 46–60 (VPAA…PVEG). Positions 81–101 (AEEDSDIGPATEEEEEEEEGN) are enriched in acidic residues. The segment covering 215–238 (AREPAEEAADEKPPEEAAEEKLTE) has biased composition (basic and acidic residues). 2 stretches are compositionally biased toward acidic residues: residues 239-251 (EATE…EPTS) and 268-281 (WDEE…EEEK). Residues 270 to 298 (EEAQDAAGEEEKEQEKEKDVENKVKNSKG) adopt a coiled-coil conformation. The segment covering 282-293 (EQEKEKDVENKV) has biased composition (basic and acidic residues).

It belongs to the CT47 family.

This is Cancer/testis antigen family 47 member B1 from Homo sapiens (Human).